Reading from the N-terminus, the 92-residue chain is Acylphosphatase (92 aa).

The region spanning 5 to 92 (RAHVFISGRV…GKEGIFTIVW (88 aa)) is the Acylphosphatase-like domain. Catalysis depends on residues R20 and N38.

It belongs to the acylphosphatase family.

The enzyme catalyses an acyl phosphate + H2O = a carboxylate + phosphate + H(+). The sequence is that of Acylphosphatase (acyP) from Chloroflexus aurantiacus (strain ATCC 29366 / DSM 635 / J-10-fl).